The following is a 234-amino-acid chain: CHD1 helical C-terminal domain containing protein 1 (234 aa).

The disordered stretch occupies residues 1 to 38; that stretch reads MEASDGQADEREEPLEQGTNARSLERRSSTTPAKDSLV. Residues 44 to 145 form a CHD1 helical C-terminal domain (CHCT) region; it reads LDRDTFKICK…NNQTTKFLMA (102 aa). The tract at residues 200–234 is disordered; it reads LRARGPRRRGSKLPQEPKLKRRRIKEAPDTPETCL.

The protein localises to the cytoplasm. It localises to the nucleus. In terms of biological role, may play a role in regulation of apoptosis. In Bos taurus (Bovine), this protein is CHD1 helical C-terminal domain containing protein 1 (CHCT1).